The primary structure comprises 445 residues: Chromosome partition protein MukF (445 aa).

Residues Leu-213–Ile-241 form a leucine-zipper region.

Belongs to the MukF family. In terms of assembly, interacts, and probably forms a ternary complex, with MukE and MukB via its C-terminal region. The complex formation is stimulated by calcium or magnesium. It is required for an interaction between MukE and MukB.

Its subcellular location is the cytoplasm. The protein localises to the nucleoid. Its function is as follows. Involved in chromosome condensation, segregation and cell cycle progression. May participate in facilitating chromosome segregation by condensation DNA from both sides of a centrally located replisome during cell division. Not required for mini-F plasmid partitioning. Probably acts via its interaction with MukB and MukE. Overexpression results in anucleate cells. It has a calcium binding activity. The protein is Chromosome partition protein MukF of Vibrio parahaemolyticus serotype O3:K6 (strain RIMD 2210633).